The chain runs to 373 residues: MSINEIIIYLMVIFMILGAIDKIIGNKFGLGAQFEEGIMAMGSLTLAMVGIITLAPVLAKILSPIVVPIYTALGADPAMFATTLLANDMGGFALAQELALTPDAGLFAGAILGSMMGPTIVFTIPVALGIIKKEDHKYLATGVLSGIITIPIGCLIGGLVAGFSPIMIFKNLVPIILVAALIMLGLWFKPEGMIKGFTIFGKGVVIVATIGLVAGAIQQLTGLTIIPGIAPIGEGIEIVGGIALVLAGAFCLVFVITKVFNKPLMKMGKLLGMNEVAAAGMVATLANSIPMFQMLKDMDERGKIINVAFAVSAAFVLGDHLGFTAGVAQDMIFPMIVGKLVGGVTAVAVGIYMANRMMKKNKAKEQTAVKDNG.

A run of 10 helical transmembrane segments spans residues 5 to 25, 38 to 58, 61 to 81, 111 to 131, 143 to 163, 166 to 186, 197 to 217, 236 to 256, 307 to 327, and 331 to 351; these read EIII…KIIG, IMAM…APVL, ILSP…AMFA, ILGS…LGII, VLSG…VAGF, IMIF…MLGL, FTIF…AGAI, IEIV…VFVI, VAFA…TAGV, and MIFP…AVGI.

It belongs to the EutH family.

Its subcellular location is the cell membrane. It catalyses the reaction ethanolamine(in) = ethanolamine(out). In terms of biological role, probably involved in the diffusion of protonated ethanolamine (EA) into the cell at low pH. At low pH most EA is protonated, and this permease becomes necessary. Contributes to bacterial survival and replication in acidic macrophage vacuoles, but not to bacterial uptake by macrophages. The polypeptide is Probable ethanolamine permease EutH (Listeria monocytogenes serotype 1/2a (strain 10403S)).